The primary structure comprises 406 residues: Cysteine desulfurase (406 aa).

Lysine 226 bears the N6-(pyridoxal phosphate)lysine mark. The active-site Cysteine persulfide intermediate is the cysteine 364.

The protein belongs to the class-V pyridoxal-phosphate-dependent aminotransferase family. Csd subfamily. In terms of assembly, homodimer. Interacts with SufE and the SufBCD complex composed of SufB, SufC and SufD. The interaction with SufE is required to mediate the direct transfer of the sulfur atom from the S-sulfanylcysteine. The cofactor is pyridoxal 5'-phosphate.

The protein localises to the cytoplasm. The catalysed reaction is (sulfur carrier)-H + L-cysteine = (sulfur carrier)-SH + L-alanine. The enzyme catalyses L-selenocysteine + AH2 = hydrogenselenide + L-alanine + A + H(+). Its pathway is cofactor biosynthesis; iron-sulfur cluster biosynthesis. In terms of biological role, cysteine desulfurases mobilize the sulfur from L-cysteine to yield L-alanine, an essential step in sulfur metabolism for biosynthesis of a variety of sulfur-containing biomolecules. Component of the suf operon, which is activated and required under specific conditions such as oxidative stress and iron limitation. Acts as a potent selenocysteine lyase in vitro, that mobilizes selenium from L-selenocysteine. Selenocysteine lyase activity is however unsure in vivo. This is Cysteine desulfurase from Escherichia coli O139:H28 (strain E24377A / ETEC).